We begin with the raw amino-acid sequence, 453 residues long: Ribulose bisphosphate carboxylase large chain (453 aa).

Residues 1–2 (MS) constitute a propeptide that is removed on maturation. Pro-3 carries the post-translational modification N-acetylproline. Lys-14 is subject to N6,N6,N6-trimethyllysine. 2 residues coordinate substrate: Asn-123 and Thr-173. The active-site Proton acceptor is Lys-175. Lys-177 lines the substrate pocket. Lys-201, Asp-203, and Glu-204 together coordinate Mg(2+). At Lys-201 the chain carries N6-carboxylysine. The active-site Proton acceptor is His-294. The substrate site is built by Arg-295, His-327, and Ser-379.

It belongs to the RuBisCO large chain family. Type I subfamily. In terms of assembly, heterohexadecamer of 8 large chains and 8 small chains; disulfide-linked. The disulfide link is formed within the large subunit homodimers. It depends on Mg(2+) as a cofactor. Post-translationally, the disulfide bond which can form in the large chain dimeric partners within the hexadecamer appears to be associated with oxidative stress and protein turnover.

It localises to the plastid. Its subcellular location is the chloroplast. It carries out the reaction 2 (2R)-3-phosphoglycerate + 2 H(+) = D-ribulose 1,5-bisphosphate + CO2 + H2O. It catalyses the reaction D-ribulose 1,5-bisphosphate + O2 = 2-phosphoglycolate + (2R)-3-phosphoglycerate + 2 H(+). Its function is as follows. RuBisCO catalyzes two reactions: the carboxylation of D-ribulose 1,5-bisphosphate, the primary event in carbon dioxide fixation, as well as the oxidative fragmentation of the pentose substrate in the photorespiration process. Both reactions occur simultaneously and in competition at the same active site. This chain is Ribulose bisphosphate carboxylase large chain, found in Galium album (White bedstraw).